A 435-amino-acid chain; its full sequence is ATP-dependent RNA helicase RhlB (435 aa).

The Q motif signature appears at 9–37 (QKFADFSLQTEIKTALNESGFEYCTPIQA). The 180-residue stretch at 40–219 (LPILLQKKDI…YDHMNEPEKV (180 aa)) folds into the Helicase ATP-binding domain. ATP is bound at residue 53–60 (AQTGTGKT). The short motif at 165-168 (DEAD) is the DEAD box element. A Helicase C-terminal domain is found at 243 to 390 (KMRLLLTLLE…VTNYDSEALL (148 aa)). The disordered stretch occupies residues 395–435 (APVRVHRKHNSRPQGRSGSGGKPRSGNRNAPRRHDKTRRHS). The span at 424 to 435 (APRRHDKTRRHS) shows a compositional bias: basic residues.

The protein belongs to the DEAD box helicase family. RhlB subfamily. Component of the RNA degradosome, which is a multiprotein complex involved in RNA processing and mRNA degradation.

It localises to the cytoplasm. The catalysed reaction is ATP + H2O = ADP + phosphate + H(+). DEAD-box RNA helicase involved in RNA degradation. Has RNA-dependent ATPase activity and unwinds double-stranded RNA. The chain is ATP-dependent RNA helicase RhlB from Shewanella sediminis (strain HAW-EB3).